Reading from the N-terminus, the 361-residue chain is Phospho-N-acetylmuramoyl-pentapeptide-transferase (361 aa).

Transmembrane regions (helical) follow at residues 25–45 (TGGA…WIIN), 72–92 (TPTM…VLWA), 95–115 (VNPY…VGFY), 133–153 (TRLL…VWLG), 169–189 (VVLN…VGAG), 200–220 (GLAI…AYLA), 240–260 (LAVL…FNAP), 264–284 (IFMG…IAVA), 289–309 (IVLA…IVQV), and 338–358 (QIVI…LATL).

It belongs to the glycosyltransferase 4 family. MraY subfamily. Mg(2+) is required as a cofactor.

It is found in the cell inner membrane. The enzyme catalyses UDP-N-acetyl-alpha-D-muramoyl-L-alanyl-gamma-D-glutamyl-meso-2,6-diaminopimeloyl-D-alanyl-D-alanine + di-trans,octa-cis-undecaprenyl phosphate = di-trans,octa-cis-undecaprenyl diphospho-N-acetyl-alpha-D-muramoyl-L-alanyl-D-glutamyl-meso-2,6-diaminopimeloyl-D-alanyl-D-alanine + UMP. It participates in cell wall biogenesis; peptidoglycan biosynthesis. Functionally, catalyzes the initial step of the lipid cycle reactions in the biosynthesis of the cell wall peptidoglycan: transfers peptidoglycan precursor phospho-MurNAc-pentapeptide from UDP-MurNAc-pentapeptide onto the lipid carrier undecaprenyl phosphate, yielding undecaprenyl-pyrophosphoryl-MurNAc-pentapeptide, known as lipid I. This chain is Phospho-N-acetylmuramoyl-pentapeptide-transferase, found in Rhodopseudomonas palustris (strain BisB5).